The sequence spans 662 residues: LIM domain kinase 1 (662 aa).

2 consecutive LIM zinc-binding domains span residues 24–83 (PVCA…RFGE) and 84–145 (LCHG…MVVT). The region spanning 166-259 (LVSIPACSDG…LLQLTIEHDP (94 aa)) is the PDZ domain. The disordered stretch occupies residues 262-328 (PLPRDLALPC…ASQRKDIGRS (67 aa)). Residues 272 to 287 (SPLPDPHSPLRSPVPA) show a composition bias toward pro residues. Positions 309 to 320 (SPGSSSVGSPAS) are enriched in low complexity. Residues 346–611 (LIHGEVLGKG…PSFSKLEQWL (266 aa)) form the Protein kinase domain. ATP-binding positions include 352–360 (LGKGCFGQA) and Lys375. Asp467 is an active-site residue.

Belongs to the protein kinase superfamily. TKL Ser/Thr protein kinase family. As to expression, expressed predominantly in the brain.

Its subcellular location is the cytoplasm. It localises to the nucleus. It is found in the cytoskeleton. The protein resides in the cell projection. The protein localises to the growth cone. It catalyses the reaction L-seryl-[protein] + ATP = O-phospho-L-seryl-[protein] + ADP + H(+). It carries out the reaction L-threonyl-[protein] + ATP = O-phospho-L-threonyl-[protein] + ADP + H(+). Its function is as follows. Protein kinase which regulates actin filament dynamics. Phosphorylates and inactivates the actin binding/depolymerizing factor cofilin, thereby stabilizing the actin cytoskeleton. Required for motility of the axon growth cone. This is LIM domain kinase 1 (LIMK1) from Gallus gallus (Chicken).